The primary structure comprises 290 residues: Ribosomal RNA small subunit methyltransferase A (290 aa).

Positions 27, 29, 54, 75, 100, and 125 each coordinate S-adenosyl-L-methionine.

The protein belongs to the class I-like SAM-binding methyltransferase superfamily. rRNA adenine N(6)-methyltransferase family. RsmA subfamily.

The protein localises to the cytoplasm. It catalyses the reaction adenosine(1518)/adenosine(1519) in 16S rRNA + 4 S-adenosyl-L-methionine = N(6)-dimethyladenosine(1518)/N(6)-dimethyladenosine(1519) in 16S rRNA + 4 S-adenosyl-L-homocysteine + 4 H(+). In terms of biological role, specifically dimethylates two adjacent adenosines (A1518 and A1519) in the loop of a conserved hairpin near the 3'-end of 16S rRNA in the 30S particle. May play a critical role in biogenesis of 30S subunits. The protein is Ribosomal RNA small subunit methyltransferase A of Streptococcus pyogenes serotype M1.